Here is a 149-residue protein sequence, read N- to C-terminus: Putative pre-16S rRNA nuclease (149 aa).

Belongs to the YqgF nuclease family.

The protein localises to the cytoplasm. Its function is as follows. Could be a nuclease involved in processing of the 5'-end of pre-16S rRNA. This chain is Putative pre-16S rRNA nuclease, found in Burkholderia lata (strain ATCC 17760 / DSM 23089 / LMG 22485 / NCIMB 9086 / R18194 / 383).